The following is a 192-amino-acid chain: Imidazole glycerol phosphate synthase subunit HisH (192 aa).

In terms of domain architecture, Glutamine amidotransferase type-1 spans 1 to 192; it reads MIAIIDYGLG…QALKGGFIND (192 aa). C77 serves as the catalytic Nucleophile. Residues H169 and E171 contribute to the active site.

In terms of assembly, heterodimer of HisH and HisF.

The protein localises to the cytoplasm. The catalysed reaction is 5-[(5-phospho-1-deoxy-D-ribulos-1-ylimino)methylamino]-1-(5-phospho-beta-D-ribosyl)imidazole-4-carboxamide + L-glutamine = D-erythro-1-(imidazol-4-yl)glycerol 3-phosphate + 5-amino-1-(5-phospho-beta-D-ribosyl)imidazole-4-carboxamide + L-glutamate + H(+). It carries out the reaction L-glutamine + H2O = L-glutamate + NH4(+). It participates in amino-acid biosynthesis; L-histidine biosynthesis; L-histidine from 5-phospho-alpha-D-ribose 1-diphosphate: step 5/9. IGPS catalyzes the conversion of PRFAR and glutamine to IGP, AICAR and glutamate. The HisH subunit catalyzes the hydrolysis of glutamine to glutamate and ammonia as part of the synthesis of IGP and AICAR. The resulting ammonia molecule is channeled to the active site of HisF. The sequence is that of Imidazole glycerol phosphate synthase subunit HisH from Staphylococcus epidermidis (strain ATCC 12228 / FDA PCI 1200).